The primary structure comprises 587 residues: Bifunctional dihydrofolate reductase-thymidylate synthase (587 aa).

The region spanning Asp-9 to Lys-237 is the DHFR domain. Gly-36 to Val-42 is a binding site for NADP(+). Asp-51 serves as a coordination point for substrate. NADP(+)-binding positions include Lys-108–Ser-110 and Leu-129–Thr-132. 3 residues coordinate substrate: Ile-173, Tyr-179, and Thr-194. Gly-174–Glu-181 is an NADP(+) binding site. The thymidylate synthase stretch occupies residues Asn-301 to Ala-587. Arg-324 contacts dUMP. Cys-469 is a catalytic residue. DUMP contacts are provided by residues His-470, Gln-488–Asp-492, Asn-500, and His-530–Tyr-532.

The protein in the N-terminal section; belongs to the dihydrofolate reductase family. It in the C-terminal section; belongs to the thymidylate synthase family. In terms of assembly, homodimer.

The catalysed reaction is (6S)-5,6,7,8-tetrahydrofolate + NADP(+) = 7,8-dihydrofolate + NADPH + H(+). The enzyme catalyses dUMP + (6R)-5,10-methylene-5,6,7,8-tetrahydrofolate = 7,8-dihydrofolate + dTMP. Its pathway is cofactor biosynthesis; tetrahydrofolate biosynthesis; 5,6,7,8-tetrahydrofolate from 7,8-dihydrofolate: step 1/1. Its function is as follows. Bifunctional enzyme. Involved in de novo dTMP biosynthesis. Key enzyme in folate metabolism. Catalyzes an essential reaction for de novo glycine and purine synthesis, DNA precursor synthesis, and for the conversion of dUMP to dTMP. The sequence is that of Bifunctional dihydrofolate reductase-thymidylate synthase from Plasmodium berghei (strain Anka).